A 325-amino-acid chain; its full sequence is Glutarate 2-hydroxylase (325 aa).

3 residues coordinate Fe cation: H160, D162, and H292.

Belongs to the glutarate hydroxylase family. Homotetramer. It depends on Fe(2+) as a cofactor.

It carries out the reaction glutarate + 2-oxoglutarate + O2 = (S)-2-hydroxyglutarate + succinate + CO2. It functions in the pathway amino-acid degradation. Its function is as follows. Acts as an alpha-ketoglutarate-dependent dioxygenase catalyzing hydroxylation of glutarate (GA) to L-2-hydroxyglutarate (L2HG). Functions in a L-lysine degradation pathway that proceeds via cadaverine, glutarate and L-2-hydroxyglutarate. This is Glutarate 2-hydroxylase from Escherichia coli O17:K52:H18 (strain UMN026 / ExPEC).